Consider the following 196-residue polypeptide: ATP-dependent Clp protease proteolytic subunit (196 aa).

Ser98 functions as the Nucleophile in the catalytic mechanism. Residue His123 is part of the active site.

The protein belongs to the peptidase S14 family. As to quaternary structure, fourteen ClpP subunits assemble into 2 heptameric rings which stack back to back to give a disk-like structure with a central cavity, resembling the structure of eukaryotic proteasomes.

Its subcellular location is the cytoplasm. It catalyses the reaction Hydrolysis of proteins to small peptides in the presence of ATP and magnesium. alpha-casein is the usual test substrate. In the absence of ATP, only oligopeptides shorter than five residues are hydrolyzed (such as succinyl-Leu-Tyr-|-NHMec, and Leu-Tyr-Leu-|-Tyr-Trp, in which cleavage of the -Tyr-|-Leu- and -Tyr-|-Trp bonds also occurs).. In terms of biological role, cleaves peptides in various proteins in a process that requires ATP hydrolysis. Has a chymotrypsin-like activity. Plays a major role in the degradation of misfolded proteins. ClpXP is involved in the complete degradation of the Site-2 clipped anti-sigma-W factor RsiW. This results in the release of SigW and the transcription activation of the genes under the control of the sigma-W factor. This is ATP-dependent Clp protease proteolytic subunit from Geobacillus kaustophilus (strain HTA426).